The following is a 165-amino-acid chain: MRVALYPGTFDPITLGHVDIIRRAAALVDKLVIGVAINRDKGPLFTLEERVAMIEAECAALSAETGTEIVAHPFENLLIDCARDVGAQIIVRGLRAVADFEYEFQMVGMNRALDDSVETVFLMADARRQAIASKLVKEIARLGGDVSKFVPPRVNDALKERLGRA.

T9 provides a ligand contact to substrate. ATP is bound by residues 9–10 (TF) and H17. Substrate is bound by residues K41, L78, and R92. ATP-binding positions include 93-95 (GLR), E103, and 128-134 (RQAIASK).

This sequence belongs to the bacterial CoaD family. As to quaternary structure, homohexamer. The cofactor is Mg(2+).

It is found in the cytoplasm. It carries out the reaction (R)-4'-phosphopantetheine + ATP + H(+) = 3'-dephospho-CoA + diphosphate. Its pathway is cofactor biosynthesis; coenzyme A biosynthesis; CoA from (R)-pantothenate: step 4/5. In terms of biological role, reversibly transfers an adenylyl group from ATP to 4'-phosphopantetheine, yielding dephospho-CoA (dPCoA) and pyrophosphate. In Ruegeria pomeroyi (strain ATCC 700808 / DSM 15171 / DSS-3) (Silicibacter pomeroyi), this protein is Phosphopantetheine adenylyltransferase.